The primary structure comprises 514 residues: MRFKLDGRIIFSKDVEEETQKDIVEVLENGDIFLKGVPEGKENEASKIETYEFDGKDLKLKMTSGTYTRAHEGIVRLKKPIMEKVGRKHQIGIRDVAIDRYVVTITAEPSKVSELKGLKVPECEVELEGEKINIVFENLGDGELKRNIIDRAIKFVKNELDKQDKDLTFEVCKIAPGTIVSDYKAKREITFDTDPTELAEPYGWVKRFPGRGQWFYTAPMAKLFRAFESLIIEECIDKIGFDECLFPKLIPLDVMYKMRYLEGLPEGMYYVCPPKREPEMFQDFVNEMMIKKEIPIEKLKTLLRDPAYVLAPAQCEPFYTFFDHELVDVDHPSKFFDKSGWTYRWEGGGAKGLDRVNEFLRGECVWMGTPEFVETVRDDTLKYAENLAEKLDLEYWTEVGDDPFYLEGRKTEARGIEFPDVPKYEMRLWLPHIKEERKGVAVTSANIHGTHFVEGFGIKDYKERKVWTGCTGYGLTRWVIGFLAQYGYNYDDWPELIQKKVGKLPEIPKLITWP.

Alanine 313 serves as a coordination point for L-serine. Residue cysteine 315 coordinates Zn(2+). Arginine 344 provides a ligand contact to L-serine. ATP contacts are provided by residues 344 to 346 and 355 to 356; these read RWE and RV. Residue 361-363 participates in L-serine binding; sequence RGE. Positions 363 and 470 each coordinate Zn(2+). Arginine 477 contacts ATP.

Belongs to the class-II aminoacyl-tRNA synthetase family. Type-2 seryl-tRNA synthetase subfamily. In terms of assembly, homodimer. Requires Zn(2+) as cofactor.

It localises to the cytoplasm. It carries out the reaction tRNA(Ser) + L-serine + ATP = L-seryl-tRNA(Ser) + AMP + diphosphate + H(+). The catalysed reaction is tRNA(Sec) + L-serine + ATP = L-seryl-tRNA(Sec) + AMP + diphosphate + H(+). Its pathway is aminoacyl-tRNA biosynthesis; selenocysteinyl-tRNA(Sec) biosynthesis; L-seryl-tRNA(Sec) from L-serine and tRNA(Sec): step 1/1. In terms of biological role, catalyzes the attachment of serine to tRNA(Ser). Is also able to aminoacylate tRNA(Sec) with serine, to form the misacylated tRNA L-seryl-tRNA(Sec), which will be further converted into selenocysteinyl-tRNA(Sec). The chain is Type-2 serine--tRNA ligase from Methanococcus maripaludis (strain C6 / ATCC BAA-1332).